A 340-amino-acid chain; its full sequence is Beta-1,3-N-acetylglucosaminyltransferase radical fringe (340 aa).

At 1–4 (MKIT) the chain is on the cytoplasmic side. The helical; Signal-anchor for type II membrane protein transmembrane segment at 5-25 (YVGLIKVCFLVFLLLCATVLL) threads the bilayer. Over 26 to 340 (NISWRQRDSS…AFSLAEDPTR (315 aa)) the chain is Lumenal. N-linked (GlcNAc...) asparagine glycosylation is present at asparagine 42. Residue arginine 110 coordinates substrate. N-linked (GlcNAc...) asparagine glycosylation is present at asparagine 149. 2 disulfide bridges follow: cysteine 150–cysteine 161 and cysteine 179–cysteine 242. Aspartate 183 lines the substrate pocket. Aspartate 184 lines the Mn(2+) pocket. The active site involves aspartate 272. Histidine 296 lines the Mn(2+) pocket.

Belongs to the glycosyltransferase 31 family. Mn(2+) is required as a cofactor.

The protein localises to the golgi apparatus membrane. The catalysed reaction is 3-O-(alpha-L-fucosyl)-L-threonyl-[EGF-like domain protein] + UDP-N-acetyl-alpha-D-glucosamine = 3-O-(N-acetyl-beta-D-glucosaminyl-(1-&gt;3)-alpha-L-fucosyl)-L-threonyl-[EGF-like domain protein] + UDP + H(+). It catalyses the reaction 3-O-(alpha-L-fucosyl)-L-seryl-[EGF-like domain protein] + UDP-N-acetyl-alpha-D-glucosamine = 3-O-(N-acetyl-beta-D-glucosaminyl-(1-&gt;3)-alpha-L-fucosyl)-L-seryl-[EGF-like domain protein] + UDP + H(+). Functionally, glycosyltransferase that initiates the elongation of O-linked fucose residues attached to EGF-like repeats in the extracellular domain of Notch molecules. The sequence is that of Beta-1,3-N-acetylglucosaminyltransferase radical fringe (rfng) from Xenopus laevis (African clawed frog).